A 395-amino-acid chain; its full sequence is Argininosuccinate synthase (395 aa).

Residues 9-17 and Ala37 contribute to the ATP site; that span reads AYSGGLDTS. L-citrulline contacts are provided by Tyr87 and Ser92. Gly117 provides a ligand contact to ATP. Residues Thr119, Asn123, and Asp124 each contribute to the L-aspartate site. Residue Asn123 coordinates L-citrulline. The L-citrulline site is built by Arg127, Ser173, Ser182, Glu258, and Tyr270.

It belongs to the argininosuccinate synthase family. Type 1 subfamily. In terms of assembly, homotetramer.

It localises to the cytoplasm. The catalysed reaction is L-citrulline + L-aspartate + ATP = 2-(N(omega)-L-arginino)succinate + AMP + diphosphate + H(+). Its pathway is amino-acid biosynthesis; L-arginine biosynthesis; L-arginine from L-ornithine and carbamoyl phosphate: step 2/3. This is Argininosuccinate synthase from Methanospirillum hungatei JF-1 (strain ATCC 27890 / DSM 864 / NBRC 100397 / JF-1).